The primary structure comprises 134 residues: DNA-binding protein H-NS (134 aa).

The DNA-binding element occupies Q111–A116.

This sequence belongs to the histone-like protein H-NS family. Homodimer that oligomerizes on DNA into higher-order complexes that form bridges between disparate regions of DNA compacting it. Interacts with YmoA and other similar proteins.

It is found in the cytoplasm. The protein resides in the nucleoid. A DNA-binding protein implicated in transcriptional repression and chromosome organization and compaction. Binds nucleation sites in AT-rich DNA and bridges them, forming higher-order nucleoprotein complexes and condensing the chromosome. As many horizontally transferred genes are AT-rich, it plays a central role in silencing foreign genes. A subset of genes are repressed by H-NS in association with other proteins. This chain is DNA-binding protein H-NS (hns), found in Proteus vulgaris.